Consider the following 540-residue polypeptide: Probable G-protein coupled receptor 75 (540 aa).

Positions 1 to 15 (MNSTGHLQDAPNATS) are enriched in polar residues. The segment at 1–27 (MNSTGHLQDAPNATSLHVPHSQEGNST) is disordered. Residues 1-46 (MNSTGHLQDAPNATSLHVPHSQEGNSTSLQEGLQDLIHTATLVTCT) are Extracellular-facing. N-linked (GlcNAc...) asparagine glycans are attached at residues N2, N12, and N25. A helical membrane pass occupies residues 47–67 (FLLAVIFCLGSYGNFIVFLSF). The Cytoplasmic segment spans residues 68–86 (FDPAFRKFRTNFDFMILNL). The chain crosses the membrane as a helical span at residues 87-107 (SFCDLFICGVTAPMFTFVLFF). Over 108-120 (SSASSIPDAFCFT) the chain is Extracellular. Residues 121-141 (FHLTSSGFIIMSLKTVAVIAL) form a helical membrane-spanning segment. At 142–160 (HRLRMVLGKQPNRTASFPC) the chain is on the cytoplasmic side. The helical transmembrane segment at 161 to 181 (TVLLTLLLWATSFTLATLATL) threads the bilayer. At 182–205 (KTSKSHLCLPMSSLIAGKGKAILS) the chain is on the extracellular side. A helical transmembrane segment spans residues 206–226 (LYVVDFTFCVAVVSVSYIMIA). The Cytoplasmic segment spans residues 227–318 (QTLRKNAQVR…INLSTAKDSK (92 aa)). The chain crosses the membrane as a helical span at residues 319–339 (AVVTCVIIVLSVLVCCLPLGI). Topologically, residues 340 to 350 (SLVQVVLSSNG) are extracellular. The helical transmembrane segment at 351–371 (SFILYQFELFGFTLIFFKSGL) threads the bilayer. Topologically, residues 372–540 (NPFIYSRNSA…SAKQIPVPSV (169 aa)) are cytoplasmic.

It belongs to the G-protein coupled receptor 1 family. Expressed at high levels in brain and spinal cord and at detectable levels in retinal pigment epithelium. In situ hybridization of adult eye sections localized transcripts only to the perivascular cells, surrounding retinal arterioles, in the ganglion cell/nerve fiber layer. Also expressed by islet cells (at protein level).

It is found in the cell membrane. Functionally, g protein-coupled receptor that is activated by the chemokine CCL5/RANTES. Probably coupled to heterotrimeric Gq proteins, it stimulates inositol trisphosphate production and calcium mobilization upon activation. Together with CCL5/RANTES, may play a role in neuron survival through activation of a downstream signaling pathway involving the PI3, Akt and MAP kinases. CCL5/RANTES may also regulate insulin secretion by pancreatic islet cells through activation of this receptor. This chain is Probable G-protein coupled receptor 75 (GPR75), found in Homo sapiens (Human).